The following is a 348-amino-acid chain: Outer membrane protein assembly factor BamC (348 aa).

The first 19 residues, 1–19 (MKYSHQLVIGSLAVFVLTA), serve as a signal peptide directing secretion. Residue C20 is the site of N-palmitoyl cysteine attachment. C20 carries S-diacylglycerol cysteine lipidation.

It belongs to the BamC family. As to quaternary structure, part of the Bam complex.

It localises to the cell outer membrane. In terms of biological role, part of the outer membrane protein assembly complex, which is involved in assembly and insertion of beta-barrel proteins into the outer membrane. This chain is Outer membrane protein assembly factor BamC, found in Vibrio atlanticus (strain LGP32) (Vibrio splendidus (strain Mel32)).